Reading from the N-terminus, the 79-residue chain is Conotoxin LiCr173 (79 aa).

The first 20 residues, 1-20 (MSGLGTMVLTLLLLVFMVTS), serve as a signal peptide directing secretion. The propeptide occupies 21 to 46 (HQDGGKKQATQRNAVNIRRRKSITQR). 3 disulfides stabilise this stretch: Cys52–Cys64, Cys56–Cys73, and Cys63–Cys77. At Phe78 the chain carries Phenylalanine amide.

This sequence belongs to the conotoxin O3 superfamily. As to expression, expressed by the venom duct.

Its subcellular location is the secreted. The polypeptide is Conotoxin LiCr173 (Conus lividus (Livid cone)).